The chain runs to 309 residues: D-galacturonate reductase (309 aa).

Tyrosine 50 (proton donor) is an active-site residue. A substrate-binding site is contributed by histidine 109. 210 to 264 (SPLGSTGSPLMSADPVVKIAEKKGISPTTVLLSYHVNRGSTVLAKSVTPARIKAN) contacts NADP(+).

It belongs to the aldo/keto reductase family.

It catalyses the reaction L-galactonate + NADP(+) = aldehydo-D-galacturonate + NADPH + H(+). It participates in carbohydrate acid metabolism. Functionally, mediates the reduction of D-galacturonate to L-galactonate, the first step in D-galacturonate catabolic process. Also has activity with D-glucuronate and DL-glyceraldehyde. No activity is observed with D-glucose, D-fructose, D-xylose, D-galactose, L-arabinose or D-mannose. Activity is seen only with NADPH and not with NADH. The chain is D-galacturonate reductase (gar1) from Hypocrea jecorina (Trichoderma reesei).